We begin with the raw amino-acid sequence, 296 residues long: Meiotically up-regulated gene 2 protein (296 aa).

Belongs to the UPF0612 family.

The protein localises to the cytoplasm. The protein resides in the nucleus. Its function is as follows. Has a role in meiosis. The polypeptide is Meiotically up-regulated gene 2 protein (mug2) (Schizosaccharomyces pombe (strain 972 / ATCC 24843) (Fission yeast)).